Here is a 1002-residue protein sequence, read N- to C-terminus: Isoleucine--tRNA ligase (1002 aa).

The short motif at 70-80 (PYANGNIHIGH) is the 'HIGH' region element. E630 provides a ligand contact to L-isoleucyl-5'-AMP. A 'KMSKS' region motif is present at residues 671–675 (KMSKS). Residue K674 coordinates ATP.

Belongs to the class-I aminoacyl-tRNA synthetase family. IleS type 1 subfamily. As to quaternary structure, monomer.

The protein localises to the cytoplasm. The catalysed reaction is tRNA(Ile) + L-isoleucine + ATP = L-isoleucyl-tRNA(Ile) + AMP + diphosphate. In terms of biological role, catalyzes the attachment of isoleucine to tRNA(Ile). As IleRS can inadvertently accommodate and process structurally similar amino acids such as valine, to avoid such errors it has two additional distinct tRNA(Ile)-dependent editing activities. One activity is designated as 'pretransfer' editing and involves the hydrolysis of activated Val-AMP. The other activity is designated 'posttransfer' editing and involves deacylation of mischarged Val-tRNA(Ile). The protein is Isoleucine--tRNA ligase of Bradyrhizobium diazoefficiens (strain JCM 10833 / BCRC 13528 / IAM 13628 / NBRC 14792 / USDA 110).